Consider the following 232-residue polypeptide: Large ribosomal subunit protein uL1 (232 aa).

The protein belongs to the universal ribosomal protein uL1 family. As to quaternary structure, part of the 50S ribosomal subunit.

In terms of biological role, binds directly to 23S rRNA. The L1 stalk is quite mobile in the ribosome, and is involved in E site tRNA release. Protein L1 is also a translational repressor protein, it controls the translation of the L11 operon by binding to its mRNA. This Bacteroides thetaiotaomicron (strain ATCC 29148 / DSM 2079 / JCM 5827 / CCUG 10774 / NCTC 10582 / VPI-5482 / E50) protein is Large ribosomal subunit protein uL1.